Reading from the N-terminus, the 715-residue chain is Protein Hook homolog 1 (715 aa).

Residues 6-122 (TVLCESLIIW…RLLQLILGCA (117 aa)) enclose the Calponin-homology (CH) domain. 2 coiled-coil regions span residues 167–434 (AGDT…DQLL) and 463–656 (IRLQ…EEKL).

The protein belongs to the hook family. In terms of assembly, interacts with microtubules.

The protein resides in the cytoplasm. It is found in the cytoskeleton. Its function is as follows. May function to promote vesicle trafficking and/or fusion. The protein is Protein Hook homolog 1 (hook1) of Danio rerio (Zebrafish).